A 219-amino-acid chain; its full sequence is MRPYVFVNVAASLDGKISDESRKQLRISCEEDLRIVDRLRAESDAIMVGIGTVLADDPRLTVKSAELREKRQKDGKEPNPLRVVVDSRCRVPLTARILNDEARTLVAVSRIAPEEKVREVKKVAEVAVFGEERVELSALLEFLHRKGVRRLMVEGGGTLISSLISQNLVDEIRIYYGPIFIGGRDSPTVCDGESFLKKCRIEKIERIGEGFAVTARFNR.

Residues Thr-52, Asp-56, 87–90 (SRCR), Val-134, and 156–159 (GGTL) each bind NADP(+).

It belongs to the HTP reductase family. In terms of assembly, homodimer.

It carries out the reaction 2,5-diamino-6-(1-D-ribitylamino)pyrimidin-4(3H)-one 5'-phosphate + NADP(+) = 2,5-diamino-6-(1-D-ribosylamino)pyrimidin-4(3H)-one 5'-phosphate + NADPH + H(+). It catalyses the reaction 2,5-diamino-6-(1-D-ribitylamino)pyrimidin-4(3H)-one 5'-phosphate + NAD(+) = 2,5-diamino-6-(1-D-ribosylamino)pyrimidin-4(3H)-one 5'-phosphate + NADH + H(+). It functions in the pathway cofactor biosynthesis; riboflavin biosynthesis. In terms of biological role, catalyzes an early step in riboflavin biosynthesis, the NADPH-dependent reduction of the ribose side chain of 2,5-diamino-6-ribosylamino-4(3H)-pyrimidinone 5'-phosphate, yielding 2,5-diamino-6-ribitylamino-4(3H)-pyrimidinone 5'-phosphate. The chain is 2,5-diamino-6-ribosylamino-4(3H)-pyrimidinone 5'-phosphate reductase from Archaeoglobus fulgidus (strain ATCC 49558 / DSM 4304 / JCM 9628 / NBRC 100126 / VC-16).